The sequence spans 436 residues: Sulfopropanediol 3-dehydrogenase (436 aa).

3 residues coordinate NAD(+): Y118, Q180, and N203. 2 residues coordinate Zn(2+): Q248 and H251. Active-site proton acceptor residues include E318 and H319. 2 residues coordinate Zn(2+): D352 and H411.

This sequence belongs to the histidinol dehydrogenase family. HpsN subfamily. The cofactor is Zn(2+).

It catalyses the reaction (2R)-3-sulfopropanediol + 2 NAD(+) + H2O = (2R)-3-sulfolactate + 2 NADH + 3 H(+). Its function is as follows. Catalyzes the NAD-dependent oxidation of (R)-2,3-dihydroxypropane-1-sulfonate to (R)-3-sulfolactate. In Cupriavidus pinatubonensis (strain JMP 134 / LMG 1197) (Cupriavidus necator (strain JMP 134)), this protein is Sulfopropanediol 3-dehydrogenase.